The sequence spans 622 residues: Threonine--tRNA ligase (622 aa).

Residues 1–141 (MKTLLIHSDY…SRKITTERKE (141 aa)) form an editing domain region. Residues 199–498 (PHVKYIKEKE…TLENKPPALP (300 aa)) are catalytic. Residues Cys-291, His-343, and His-467 each contribute to the Zn(2+) site.

The protein belongs to the class-II aminoacyl-tRNA synthetase family. Homodimer. The cofactor is Zn(2+).

The protein resides in the cytoplasm. It carries out the reaction tRNA(Thr) + L-threonine + ATP = L-threonyl-tRNA(Thr) + AMP + diphosphate + H(+). Functionally, catalyzes the attachment of threonine to tRNA(Thr) in a two-step reaction: L-threonine is first activated by ATP to form Thr-AMP and then transferred to the acceptor end of tRNA(Thr). Also edits incorrectly charged L-seryl-tRNA(Thr). The sequence is that of Threonine--tRNA ligase from Methanococcus maripaludis (strain C5 / ATCC BAA-1333).